The sequence spans 346 residues: 4-hydroxy-2-oxohexanoate aldolase (346 aa).

The 253-residue stretch at 7 to 259 (VRITDTSLRD…KTGIDFFDIA (253 aa)) folds into the Pyruvate carboxyltransferase domain. 15–16 (RD) provides a ligand contact to substrate. Mn(2+) is bound at residue Asp-16. The active-site Proton acceptor is His-19. Substrate-binding residues include Ser-169 and His-198. Positions 198 and 200 each coordinate Mn(2+). A substrate-binding site is contributed by Tyr-289.

This sequence belongs to the 4-hydroxy-2-oxovalerate aldolase family. In terms of assembly, homodimer. Forms a heterotetramer composed of two aldolase (HsaF) and two dehydrogenase (HsaG) subunits. Requires Mn(2+) as cofactor.

The enzyme catalyses (S)-4-hydroxy-2-oxohexanoate = propanal + pyruvate. The catalysed reaction is (S)-4-hydroxy-2-oxopentanoate = acetaldehyde + pyruvate. In terms of biological role, involved in cholesterol degradation. Catalyzes the retro-aldol cleavage of 4-hydroxy-2-oxohexanoate (HOHA) to pyruvate and propanal. Can also catalyze the cleavage of 4-hydroxy-2-oxopentanoate (HOPA) to pyruvate and acetaldehyde. The aldehydes produced by this reaction are directly channeled to the dehydrogenase HsaG. The sequence is that of 4-hydroxy-2-oxohexanoate aldolase from Mycobacterium bovis (strain ATCC BAA-935 / AF2122/97).